Reading from the N-terminus, the 471-residue chain is MTETASETGSWRELLSRYLGTSIVLAGGVALYATNEFLTISLLPSTIADIGGSRLYAWVTTLYLVGSVVAATTVNTMLLRVGARSSYLMGLAVFGLASLVCAAAPSMQILVAGRTLQGIAGGLLAGLGYALINSTLPKSLWTRGSALVSAMWGVATLIGPATGGLFAQLGLWRWAFGVMTLLTALMAMLVPVALGAGGVGPGGETPVGSTHKVPVWSLLLMGAAALAISVAALPNYLVQTAGLLAAAALLVAVFVVVDWRIHAAVLPPSVFGSGPLKWIYLTMSVQMIAAMVDTYVPLFGQRLGHLTPVAAGFLGAALAVGWTVGEVASASLNSARVIGHVVAAAPLVMASGLALGAVTQRADAPVGIIALWALALLIIGTGIGIAWPHLTVRAMDSVADPAESSAAAAAINVVQLISGAFGAGLAGVVVNTAKGGEVAAARGLYMAFTVLAAAGVIASYQATHRDRRLPR.

Transmembrane regions (helical) follow at residues I23 to L43, L55 to N75, L91 to V111, L116 to L136, A146 to F166, W174 to L194, V213 to L233, L237 to V257, I279 to F299, P308 to A328, V337 to A357, V366 to A386, A410 to V430, and V438 to A458.

It belongs to the major facilitator superfamily.

The protein localises to the cell membrane. Could be involved in fluoroquinolones efflux. In Mycobacterium tuberculosis (strain CDC 1551 / Oshkosh), this protein is Probable multidrug-efflux transporter MT1670.